Reading from the N-terminus, the 348-residue chain is [FeFe] hydrogenase maturase subunit HydE (348 aa).

One can recognise a Radical SAM core domain in the interval 49–268 (DEVHIRAIIE…LLPDSNIPAT (220 aa)). Positions 63, 67, and 70 each coordinate [4Fe-4S] cluster. Positions 311, 319, and 322 each coordinate [2Fe-2S] cluster.

It belongs to the radical SAM superfamily. HydE family. Monomer. [4Fe-4S] cluster is required as a cofactor. [2Fe-2S] cluster serves as cofactor.

Functionally, required for the maturation of the [FeFe]-hydrogenase HydA. Catalyzes the reductive cleavage of S-adenosyl-L-methionine (in vitro), suggesting it may contribute to the biosynthesis of an essential sulfur-containing ligand that binds to the hydrogenase active site [2Fe-2S] cluster. The polypeptide is [FeFe] hydrogenase maturase subunit HydE (Thermotoga maritima (strain ATCC 43589 / DSM 3109 / JCM 10099 / NBRC 100826 / MSB8)).